The following is an 823-amino-acid chain: Kinesin-like protein KIN-7N (823 aa).

The 323-residue stretch at 3–325 (KICVAVRVRP…LQFASRAKRI (323 aa)) folds into the Kinesin motor domain. Residue 83 to 90 (GQTSSGKT) participates in ATP binding. Coiled-coil stretches lie at residues 341–414 (LKRQ…NLNN), 527–557 (RENH…FNEQ), and 696–786 (EKKL…MEEE).

This sequence belongs to the TRAFAC class myosin-kinesin ATPase superfamily. Kinesin family. KIN-7 subfamily.

The polypeptide is Kinesin-like protein KIN-7N (Arabidopsis thaliana (Mouse-ear cress)).